The chain runs to 722 residues: NCK-interacting protein with SH3 domain (722 aa).

The 58-residue stretch at 1–58 (MYRALYAFRSAEPNALAFAAGETFLVLERSSAHWWLAARARSGETGYVPPAYLRRLQG) folds into the SH3 domain. Disordered regions lie at residues 101–122 (KETL…SSTS) and 149–286 (PSSE…ASDD). Positions 110-121 (SASSVAVMTSST) are enriched in low complexity. Ser-120 bears the Phosphoserine mark. The span at 169 to 185 (QIPPQPRRAAPTTPPPP) shows a compositional bias: pro residues. The Nuclear localization signal signature appears at 175–192 (RRAAPTTPPPPVKRRDRE). Position 181 is a phosphothreonine (Thr-181). Residues 206–240 (PSGGNSVSSGSSVSSTSLDTLYTSSSPSEPGSSCS) are compositionally biased toward low complexity. Ser-294 bears the Phosphoserine mark.

As to quaternary structure, associates with the intermediate filaments, vimentin and desmin. Binds the first and third SH3 domains of NCK. Binds the proline-rich domains of N-WASP through its SH3 domain. Similarly, binds diaphanous protein homolog 1 (DRF1). Binds the SH3 domains of GRB2 through its proline-rich domains. Interacts with Helicobacter pylori toxin vacA. Isoform 4 interacts with FHOD1. Interacts with FASLG. Interacts with TMIGD2. As to expression, highest expression in heart, brain, skeletal muscle, kidney and liver. Lower levels in placenta, lung, small intestine and leukocytes. Weak expression in colon, thymus and spleen.

The protein localises to the nucleus. Functionally, has an important role in stress fiber formation induced by active diaphanous protein homolog 1 (DRF1). Induces microspike formation, in vivo. In vitro, stimulates N-WASP-induced ARP2/3 complex activation in the absence of CDC42. May play an important role in the maintenance of sarcomeres and/or in the assembly of myofibrils into sarcomeres. Implicated in regulation of actin polymerization and cell adhesion. Plays a role in angiogenesis. In Homo sapiens (Human), this protein is NCK-interacting protein with SH3 domain (NCKIPSD).